The chain runs to 417 residues: Serine hydroxymethyltransferase (417 aa).

Residues Leu-121 and 125-127 (GHL) each bind (6S)-5,6,7,8-tetrahydrofolate. Position 229 is an N6-(pyridoxal phosphate)lysine (Lys-229). 354–356 (SPF) provides a ligand contact to (6S)-5,6,7,8-tetrahydrofolate.

Belongs to the SHMT family. Homodimer. Requires pyridoxal 5'-phosphate as cofactor.

Its subcellular location is the cytoplasm. It catalyses the reaction (6R)-5,10-methylene-5,6,7,8-tetrahydrofolate + glycine + H2O = (6S)-5,6,7,8-tetrahydrofolate + L-serine. Its pathway is one-carbon metabolism; tetrahydrofolate interconversion. It participates in amino-acid biosynthesis; glycine biosynthesis; glycine from L-serine: step 1/1. In terms of biological role, catalyzes the reversible interconversion of serine and glycine with tetrahydrofolate (THF) serving as the one-carbon carrier. This reaction serves as the major source of one-carbon groups required for the biosynthesis of purines, thymidylate, methionine, and other important biomolecules. Also exhibits THF-independent aldolase activity toward beta-hydroxyamino acids, producing glycine and aldehydes, via a retro-aldol mechanism. In Dichelobacter nodosus (strain VCS1703A), this protein is Serine hydroxymethyltransferase.